Consider the following 190-residue polypeptide: Dynein axonemal light chain 1 (190 aa).

Ala-2 carries the N-acetylalanine modification. LRR repeat units follow at residues 47 to 69 (LANCEKLSLSTNCIEKIANLNGL), 70 to 93 (KNLRILSLGRNNIKNLNGLEAVGD), 95 to 114 (LEELWISYNFIEKLKGIHVM), and 115 to 138 (RKLKILYISNNLVKDWAEFVKLAE). Position 56 is a phosphoserine (Ser-56).

This sequence belongs to the dynein light chain LC1-type family. Interacts with ZMYND10 (via C-terminus). Interacts with DNAH5, a outer arm dynein heavy chain. Interacts with tubulin located within the A-tubule of the outer doublets in a ATP-independent manner.

Its subcellular location is the cytoplasm. The protein resides in the cytoskeleton. It localises to the cilium axoneme. In terms of biological role, part of the multisubunit axonemal ATPase complexes that generate the force for cilia motility and govern beat frequency. Component of the outer arm dynein (ODA). May be involved in a mechanosensory feedback mechanism controlling ODA activity based on external conformational cues by tethering the outer arm dynein heavy chain (DNAH5) to the microtubule within the axoneme. Important for ciliary function in the airways and for the function of the cilia that produce the nodal flow essential for the determination of the left-right asymmetry. In Rattus norvegicus (Rat), this protein is Dynein axonemal light chain 1.